The sequence spans 252 residues: Methionine aminopeptidase (252 aa).

His-76 is a substrate binding site. Residues Asp-93, Asp-104, and His-168 each coordinate a divalent metal cation. His-175 is a binding site for substrate. A divalent metal cation is bound by residues Glu-202 and Glu-233.

The protein belongs to the peptidase M24A family. Methionine aminopeptidase type 1 subfamily. Monomer. Requires Co(2+) as cofactor. Zn(2+) serves as cofactor. The cofactor is Mn(2+). Fe(2+) is required as a cofactor.

It catalyses the reaction Release of N-terminal amino acids, preferentially methionine, from peptides and arylamides.. Removes the N-terminal methionine from nascent proteins. The N-terminal methionine is often cleaved when the second residue in the primary sequence is small and uncharged (Met-Ala-, Cys, Gly, Pro, Ser, Thr, or Val). Requires deformylation of the N(alpha)-formylated initiator methionine before it can be hydrolyzed. The protein is Methionine aminopeptidase of Staphylococcus aureus (strain MRSA252).